Reading from the N-terminus, the 69-residue chain is uncharacterized protein (69 aa).

A CHCH domain is found at 6–56; the sequence is SEECTPAKKKYDACFNDWYANKFLKGDLHNRDCDELFAEYKSCLLKALKTK. 2 consecutive short sequence motifs (cx9C motif) follow at residues 9 to 19 and 38 to 48; these read CTPAKKKYDAC and CDELFAEYKSC. Intrachain disulfides connect C9-C48 and C19-C38.

This sequence belongs to the TRIAP1/MDM35 family.

This is an uncharacterized protein from Schizosaccharomyces pombe (strain 972 / ATCC 24843) (Fission yeast).